Consider the following 383-residue polypeptide: Neuropeptide Y receptor type 1 (383 aa).

Residues 1-44 (MNSTSFSQVENHSIYYNFSEKNSRFLAFENDDCHLPLAMIFTLA) are Extracellular-facing. Asn2, Asn11, and Asn17 each carry an N-linked (GlcNAc...) asparagine glycan. The chain crosses the membrane as a helical span at residues 45–65 (LAYGAVIILGVSGNLALIIII). Over 66 to 76 (LKQKEMRNVTN) the chain is Cytoplasmic. The helical transmembrane segment at 77-97 (ILIVNLSFSDLLVAIMCLPFT) threads the bilayer. The Extracellular portion of the chain corresponds to 98–116 (FVYTLMDHWVFGEAMCKLN). Cys113 and Cys198 are disulfide-bonded. A helical transmembrane segment spans residues 117–137 (PFVQCVSITVSIFSLVLIAVE). At 138–154 (RHQLIINPRGWRPNNRH) the chain is on the cytoplasmic side. The helical transmembrane segment at 155 to 175 (AYVGIAVIWVLAVASSLPFLI) threads the bilayer. Residues 176–211 (YQVLTDEPFQNVTLDAFKDKYVCFDKFPSDSHRLSY) are Extracellular-facing. The N-linked (GlcNAc...) asparagine glycan is linked to Asn186. The helical transmembrane segment at 212-232 (TTLLLVLQYFGPLCFIFICYF) threads the bilayer. Over 233 to 260 (KIYVRLKRRNSMMDKMRDNKYRSSEAKR) the chain is Cytoplasmic. A helical transmembrane segment spans residues 261–281 (INIMLLSIVVAFAVCWLPLTI). Topologically, residues 282 to 299 (FNTVFDWDHQIIATCNHN) are extracellular. The helical transmembrane segment at 300–320 (LLFLLCHLTAMISTCVNPIFY) threads the bilayer. The Cytoplasmic segment spans residues 321–383 (GFLNKNFQRD…KIHTDDNEKI (63 aa)). The S-palmitoyl cysteine moiety is linked to residue Cys338. At Ser368 the chain carries Phosphoserine.

The protein belongs to the G-protein coupled receptor 1 family.

It is found in the cell membrane. Functionally, receptor for neuropeptide Y and peptide YY. The sequence is that of Neuropeptide Y receptor type 1 (NPY1R) from Bos taurus (Bovine).